Reading from the N-terminus, the 458-residue chain is Argininosuccinate lyase (458 aa).

It belongs to the lyase 1 family. Argininosuccinate lyase subfamily.

It is found in the cytoplasm. The catalysed reaction is 2-(N(omega)-L-arginino)succinate = fumarate + L-arginine. The protein operates within amino-acid biosynthesis; L-arginine biosynthesis; L-arginine from L-ornithine and carbamoyl phosphate: step 3/3. This chain is Argininosuccinate lyase, found in Neisseria meningitidis serogroup A / serotype 4A (strain DSM 15465 / Z2491).